Consider the following 649-residue polypeptide: Sodium/nucleoside cotransporter 1 (649 aa).

Over 1–80 the chain is Cytoplasmic; sequence MENDPSRRRE…ARSFCREHMQ (80 aa). The chain crosses the membrane as a helical span at residues 81 to 104; sequence LFRWIGTGLLCTGLSAFLLVACLL. Residues 105–109 are Extracellular-facing; sequence DFQRA. A helical transmembrane segment spans residues 110–128; sequence LALFVLTCVVLTFLGHRLL. The Cytoplasmic segment spans residues 129 to 147; sequence KRLLGPKLRRFLKPQGHPR. Residues 148–167 traverse the membrane as a helical segment; that stretch reads LLLWFKRGLALAAFLGLVLW. Over 168 to 178 the chain is Extracellular; sequence LSLDTSQRPEQ. The chain crosses the membrane as a helical span at residues 179 to 195; it reads LVSFAGICVFVALLFAC. The Cytoplasmic portion of the chain corresponds to 196 to 201; sequence SKHHCA. The chain crosses the membrane as a helical span at residues 202–222; sequence VSWRAVSWGLGLQFVLGLLVI. At 223 to 261 the chain is on the extracellular side; that stretch reads RTEPGFIAFEWLGEQIRIFLSYTKAGSSFVFGEALVKDV. The chain crosses the membrane as a helical span at residues 262–283; it reads FAFQVLPIIVFFSCVISVLYHV. The Cytoplasmic segment spans residues 284–294; the sequence is GLMQWVILKIA. The chain crosses the membrane as a helical span at residues 295–318; it reads WLMQVTMGTTATETLSVAGNIFVS. At 319 to 337 the chain is on the extracellular side; sequence QTEAPLLIRPYLADMTLSE. A helical membrane pass occupies residues 338 to 360; sequence VHVVMTGGYATIAGSLLGAYISF. Over 361–366 the chain is Cytoplasmic; sequence GIDATS. The chain crosses the membrane as a helical span at residues 367-386; that stretch reads LIAASVMAAPCALALSKLVY. Residues 387-423 lie on the Extracellular side of the membrane; sequence PEVEESKFRREEGVKLTYGDAQNLIEAASTGAAISVK. A helical membrane pass occupies residues 424–446; that stretch reads VVANIAANLIAFLAVLDFINAAL. The Cytoplasmic segment spans residues 447–457; sequence SWLGDMVDIQG. The chain crosses the membrane as a helical span at residues 458-479; sequence LSFQLICSYILRPVAFLMGVAW. The Extracellular segment spans residues 480 to 534; the sequence is EDCPVVAELLGIKLFLNEFVAYQDLSKYKQRRLAGAEEWVGDRKQWISVRAEVLT. Residues 535–558 form a helical membrane-spanning segment; it reads TFALCGFANFSSIGIMLGGLTSMV. Over 559 to 569 the chain is Cytoplasmic; it reads PQRKSDFSQIV. The chain crosses the membrane as a helical span at residues 570–592; sequence LRALFTGACVSLVNACMAGILYM. The Extracellular portion of the chain corresponds to 593-649; that stretch reads PRGAEVDCMSLLNTTLSSSSFEIYQCCREAFQSVNPEFSPEALDNCCRFYNHTICAQ. N-linked (GlcNAc...) asparagine glycosylation is found at Asn605 and Asn643.

Belongs to the concentrative nucleoside transporter (CNT) (TC 2.A.41) family. Post-translationally, N-glycosylated. N-glycosylation is required for localization to the plasma membrane and the transporter activity. Expressed in kidney.

The protein localises to the cell membrane. It is found in the apical cell membrane. The catalysed reaction is uridine(out) + Na(+)(out) = uridine(in) + Na(+)(in). It catalyses the reaction thymidine(out) + Na(+)(out) = thymidine(in) + Na(+)(in). It carries out the reaction cytidine(out) + Na(+)(out) = cytidine(in) + Na(+)(in). The enzyme catalyses adenosine(out) + Na(+)(out) = adenosine(in) + Na(+)(in). Its activity is regulated as follows. Due to its high apparent affinity but slow transport, adenosine could act as a negative regulator of pyrimidine transport under some conditions. Sodium and pyrimidine nucleoside symporter of the plasma membrane that imports uridine, thymidine and cytidine into cells by coupling their transport to the transmembrane sodium electrochemical gradient. Also transports adenosine, an atypical substrate transported with high apparent affinity, but low maximum velocity. Therefore, exhibits the transport characteristics of the nucleoside transport system cit or N2 subtype (N2/cit). Involved in renal nucleoside (re)absorption. The sequence is that of Sodium/nucleoside cotransporter 1 from Homo sapiens (Human).